Here is a 238-residue protein sequence, read N- to C-terminus: Probable transcriptional regulatory protein CTA_0499 (238 aa).

A disordered region spans residues 1-21 (MAGHSKWANTKHRKERADHKK). The segment covering 9–21 (NTKHRKERADHKK) has biased composition (basic residues).

This sequence belongs to the TACO1 family.

The protein resides in the cytoplasm. This is Probable transcriptional regulatory protein CTA_0499 from Chlamydia trachomatis serovar A (strain ATCC VR-571B / DSM 19440 / HAR-13).